The following is a 103-amino-acid chain: MYAVFIAGGKQHRVEEGEVLRLEKIEVATGESVDFDQVLLVTKGDDVKIGAPYVEGAKVTAEVVSHGRADKVRIIKFRRRKHSMTRQGHRQWYTEVKITGIAG.

This sequence belongs to the bacterial ribosomal protein bL21 family. Part of the 50S ribosomal subunit. Contacts protein L20.

Functionally, this protein binds to 23S rRNA in the presence of protein L20. The polypeptide is Large ribosomal subunit protein bL21 (Saccharophagus degradans (strain 2-40 / ATCC 43961 / DSM 17024)).